The primary structure comprises 351 residues: Methionine import ATP-binding protein MetN (351 aa).

The region spanning Ile-2–Val-241 is the ABC transporter domain. Gly-38–Ser-45 provides a ligand contact to ATP.

This sequence belongs to the ABC transporter superfamily. Methionine importer (TC 3.A.1.24) family. As to quaternary structure, the complex is composed of two ATP-binding proteins (MetN), two transmembrane proteins (MetI) and a solute-binding protein (MetQ).

It is found in the cell inner membrane. The catalysed reaction is L-methionine(out) + ATP + H2O = L-methionine(in) + ADP + phosphate + H(+). The enzyme catalyses D-methionine(out) + ATP + H2O = D-methionine(in) + ADP + phosphate + H(+). Its function is as follows. Part of the ABC transporter complex MetNIQ involved in methionine import. Responsible for energy coupling to the transport system. This is Methionine import ATP-binding protein MetN from Rhodospirillum rubrum (strain ATCC 11170 / ATH 1.1.1 / DSM 467 / LMG 4362 / NCIMB 8255 / S1).